Consider the following 677-residue polypeptide: Methionine--tRNA ligase (677 aa).

Positions 14 to 24 match the 'HIGH' region motif; that stretch reads PYANGAIHLGH. Residues cysteine 145, cysteine 148, cysteine 158, and cysteine 161 each coordinate Zn(2+). Positions 330 to 334 match the 'KMSKS' region motif; sequence KMSKS. An ATP-binding site is contributed by lysine 333. Residues 576 to 677 form the tRNA-binding domain; sequence DFAKVDLRVA…EGALPGMRVM (102 aa).

Belongs to the class-I aminoacyl-tRNA synthetase family. MetG type 1 subfamily. As to quaternary structure, homodimer. It depends on Zn(2+) as a cofactor.

Its subcellular location is the cytoplasm. It carries out the reaction tRNA(Met) + L-methionine + ATP = L-methionyl-tRNA(Met) + AMP + diphosphate. Functionally, is required not only for elongation of protein synthesis but also for the initiation of all mRNA translation through initiator tRNA(fMet) aminoacylation. The sequence is that of Methionine--tRNA ligase from Saccharophagus degradans (strain 2-40 / ATCC 43961 / DSM 17024).